The following is a 529-amino-acid chain: Bifunctional purine biosynthesis protein PurH (529 aa).

The MGS-like domain occupies 2-149; it reads TDLSPVRRAL…KNHAFVNVVV (148 aa).

The protein belongs to the PurH family.

It catalyses the reaction (6R)-10-formyltetrahydrofolate + 5-amino-1-(5-phospho-beta-D-ribosyl)imidazole-4-carboxamide = 5-formamido-1-(5-phospho-D-ribosyl)imidazole-4-carboxamide + (6S)-5,6,7,8-tetrahydrofolate. The enzyme catalyses IMP + H2O = 5-formamido-1-(5-phospho-D-ribosyl)imidazole-4-carboxamide. It functions in the pathway purine metabolism; IMP biosynthesis via de novo pathway; 5-formamido-1-(5-phospho-D-ribosyl)imidazole-4-carboxamide from 5-amino-1-(5-phospho-D-ribosyl)imidazole-4-carboxamide (10-formyl THF route): step 1/1. The protein operates within purine metabolism; IMP biosynthesis via de novo pathway; IMP from 5-formamido-1-(5-phospho-D-ribosyl)imidazole-4-carboxamide: step 1/1. In Ruegeria pomeroyi (strain ATCC 700808 / DSM 15171 / DSS-3) (Silicibacter pomeroyi), this protein is Bifunctional purine biosynthesis protein PurH.